A 542-amino-acid chain; its full sequence is Organic anion transporter 3 (542 aa).

Residues 1–20 (MTFSEILDRVGSMGRFQFLH) lie on the Cytoplasmic side of the membrane. The residue at position 4 (Ser4) is a Phosphoserine. Residues 21-41 (VAILGLPILNMANHNLLQIFT) traverse the membrane as a helical segment. Topologically, residues 42–123 (AATPVHHCRP…LVCNSNKLKE (82 aa)) are extracellular. N-linked (GlcNAc...) asparagine glycosylation occurs at Asn86. The helical transmembrane segment at 124-144 (MAQSIFMAGILIGGLVLGDLS) threads the bilayer. The Cytoplasmic portion of the chain corresponds to 145-154 (DRFGRRPILT). A helical membrane pass occupies residues 155-175 (CSYLLLAASGSGAAFSPTFPI). Position 176 (Tyr176) is a topological domain, extracellular. A helical membrane pass occupies residues 177 to 197 (MVFRFLCGFGISGITLSTVIL). The Cytoplasmic segment spans residues 198–212 (NVEWVPTRMRAIMST). A helical transmembrane segment spans residues 213 to 233 (ALGYCYTFGQFILPGLAYAIP). Residues 234-236 (QWR) are Extracellular-facing. The chain crosses the membrane as a helical span at residues 237-257 (WLQLTVSIPFFIFFLSSWWTP). Over 258–327 (ESIRWLVLSG…FRIPMLRRMT (70 aa)) the chain is Cytoplasmic. The chain crosses the membrane as a helical span at residues 328 to 348 (FCLSLAWFATGFAYYSLAMGV). At 349 to 354 (EEFGVN) the chain is on the extracellular side. Residues 355–375 (LYILQIIFGGVDVPAKFITIL) form a helical membrane-spanning segment. Over 376–386 (SLSYLGRHTTQ) the chain is Cytoplasmic. A helical transmembrane segment spans residues 387–407 (AAALLLAGGAILALTFVPLDL). Over 408–471 (QTVRTVLAVF…LVKITGEVQP (64 aa)) the chain is Extracellular. A helical transmembrane segment spans residues 472–492 (FIPNIIYGITALLGGSAAFFL). The Cytoplasmic portion of the chain corresponds to 493-542 (PETLNQPLPETIEDLENWSLRAKKPKQEPEVEKASQRIPLQPHGPGLGSS). The tract at residues 515–542 (KKPKQEPEVEKASQRIPLQPHGPGLGSS) is disordered. The segment covering 517 to 527 (PKQEPEVEKAS) has biased composition (basic and acidic residues).

This sequence belongs to the major facilitator (TC 2.A.1) superfamily. Organic cation transporter (TC 2.A.1.19) family.

It localises to the basolateral cell membrane. It carries out the reaction estrone 3-sulfate(out) + glutarate(in) = estrone 3-sulfate(in) + glutarate(out). The enzyme catalyses estrone 3-sulfate(in) + 2-oxoglutarate(out) = estrone 3-sulfate(out) + 2-oxoglutarate(in). It catalyses the reaction glutarate(in) + 2-oxoglutarate(out) = glutarate(out) + 2-oxoglutarate(in). The catalysed reaction is urate(in) + 2-oxoglutarate(out) = urate(out) + 2-oxoglutarate(in). It carries out the reaction taurocholate(out) + glutarate(in) = taurocholate(in) + glutarate(out). The enzyme catalyses dehydroepiandrosterone 3-sulfate(out) + glutarate(in) = dehydroepiandrosterone 3-sulfate(in) + glutarate(out). It catalyses the reaction prostaglandin F2alpha(out) + glutarate(in) = prostaglandin F2alpha(in) + glutarate(out). The catalysed reaction is prostaglandin F2alpha(out) + 2-oxoglutarate(in) = prostaglandin F2alpha(in) + 2-oxoglutarate(out). It carries out the reaction (R)-carnitine(out) + 2-oxoglutarate(in) = (R)-carnitine(in) + 2-oxoglutarate(out). The enzyme catalyses glutarate(in) + (R)-carnitine(out) = glutarate(out) + (R)-carnitine(in). It catalyses the reaction prostaglandin E2(out) + 2-oxoglutarate(in) = prostaglandin E2(in) + 2-oxoglutarate(out). The catalysed reaction is prostaglandin E2(out) + glutarate(in) = prostaglandin E2(in) + glutarate(out). It carries out the reaction urate(in) + glutarate(out) = urate(out) + glutarate(in). The enzyme catalyses taurocholate(out) + 2-oxoglutarate(in) = taurocholate(in) + 2-oxoglutarate(out). It catalyses the reaction dehydroepiandrosterone 3-sulfate(out) + 2-oxoglutarate(in) = dehydroepiandrosterone 3-sulfate(in) + 2-oxoglutarate(out). The catalysed reaction is kynurenate(out) + a dicarboxylate(in) = kynurenate(in) + a dicarboxylate(out). It carries out the reaction (indol-3-yl)acetate(out) + a dicarboxylate(in) = (indol-3-yl)acetate(in) + a dicarboxylate(out). The enzyme catalyses indoxyl sulfate(out) + a dicarboxylate(in) = indoxyl sulfate(in) + a dicarboxylate(out). It catalyses the reaction N-benzoylglycine(out) + a dicarboxylate(in) = N-benzoylglycine(in) + a dicarboxylate(out). The catalysed reaction is 3-carboxy-4-methyl-5-propyl-2-furanpropanoate(out) + a dicarboxylate(in) = 3-carboxy-4-methyl-5-propyl-2-furanpropanoate(in) + a dicarboxylate(out). It carries out the reaction (6R)-L-erythro-5,6,7,8-tetrahydrobiopterin(out) + a dicarboxylate(in) = (6R)-L-erythro-5,6,7,8-tetrahydrobiopterin(in) + a dicarboxylate(out). The enzyme catalyses L-erythro-7,8-dihydrobiopterin(out) + a dicarboxylate(in) = L-erythro-7,8-dihydrobiopterin(in) + a dicarboxylate(out). It catalyses the reaction L-sepiapterin(out) + a dicarboxylate(in) = L-sepiapterin(in) + a dicarboxylate(out). Functions as an organic anion/dicarboxylate exchanger that couples organic anion uptake indirectly to the sodium gradient. Transports organic anions such as estrone 3-sulfate (E1S) and urate in exchange for dicarboxylates such as glutarate or ketoglutarate (2-oxoglutarate). Plays an important role in the excretion of endogenous and exogenous organic anions, especially from the kidney and the brain. E1S transport is pH- and chloride-dependent and may also involve E1S/cGMP exchange. Responsible for the transport of prostaglandin E2 (PGE2) and prostaglandin F2(alpha) (PGF2(alpha)) in the basolateral side of the renal tubule. Involved in the transport of neuroactive tryptophan metabolites kynurenate and xanthurenate. Functions as a biopterin transporters involved in the uptake and the secretion of coenzymes tetrahydrobiopterin (BH4), dihydrobiopterin (BH2) and sepiapterin to urine, thereby determining baseline levels of blood biopterins. May be involved in the basolateral transport of steviol, a metabolite of the popular sugar substitute stevioside. May participate in the detoxification/ renal excretion of drugs and xenobiotics, such as the histamine H(2)-receptor antagonists fexofenadine and cimetidine, the antibiotic benzylpenicillin (PCG), the anionic herbicide 2,4-dichloro-phenoxyacetate (2,4-D), the diagnostic agent p-aminohippurate (PAH), the antiviral acyclovir (ACV), and the mycotoxin ochratoxin (OTA), by transporting these exogenous organic anions across the cell membrane in exchange for dicarboxylates such as 2-oxoglutarate. Contributes to the renal uptake of potent uremic toxins (indoxyl sulfate (IS), indole acetate (IA), hippurate/N-benzoylglycine (HA) and 3-carboxy-4-methyl-5-propyl-2-furanpropionate (CMPF)), pravastatin, PCG, E1S and dehydroepiandrosterone sulfate (DHEAS), and is partly involved in the renal uptake of temocaprilat (an angiotensin-converting enzyme (ACE) inhibitor). May contribute to the release of cortisol in the adrenals. Involved in one of the detoxification systems on the choroid plexus (CP), removes substrates such as E1S or taurocholate (TC), PCG, 2,4-D and PAH, from the cerebrospinal fluid (CSF) to the blood for eventual excretion in urine and bile. Also contributes to the uptake of several other organic compounds such as the prostanoids prostaglandin E(2) and prostaglandin F(2-alpha), L-carnitine, and the therapeutic drugs allopurinol, 6-mercaptopurine (6-MP) and 5-fluorouracil (5-FU). Mediates the transport of PAH, PCG, and the statins pravastatin and pitavastatin, from the cerebrum into the blood circulation across the blood-brain barrier (BBB). In summary, plays a role in the efflux of drugs and xenobiotics, helping reduce their undesired toxicological effects on the body. This chain is Organic anion transporter 3 (SLC22A8), found in Pongo abelii (Sumatran orangutan).